The chain runs to 245 residues: 1-(5-phosphoribosyl)-5-[(5-phosphoribosylamino)methylideneamino] imidazole-4-carboxamide isomerase (245 aa).

Aspartate 7 (proton acceptor) is an active-site residue. Aspartate 129 serves as the catalytic Proton donor.

The protein belongs to the HisA/HisF family.

The protein resides in the cytoplasm. The catalysed reaction is 1-(5-phospho-beta-D-ribosyl)-5-[(5-phospho-beta-D-ribosylamino)methylideneamino]imidazole-4-carboxamide = 5-[(5-phospho-1-deoxy-D-ribulos-1-ylimino)methylamino]-1-(5-phospho-beta-D-ribosyl)imidazole-4-carboxamide. Its pathway is amino-acid biosynthesis; L-histidine biosynthesis; L-histidine from 5-phospho-alpha-D-ribose 1-diphosphate: step 4/9. This chain is 1-(5-phosphoribosyl)-5-[(5-phosphoribosylamino)methylideneamino] imidazole-4-carboxamide isomerase, found in Enterobacter sp. (strain 638).